Here is a 240-residue protein sequence, read N- to C-terminus: UDP-2,3-diacylglucosamine hydrolase (240 aa).

Mn(2+) contacts are provided by aspartate 8, histidine 10, aspartate 41, asparagine 78, and histidine 113. 78-79 (NR) serves as a coordination point for substrate. Substrate contacts are provided by aspartate 121, serine 159, asparagine 163, lysine 166, and histidine 194. Residues histidine 194 and histidine 196 each coordinate Mn(2+).

This sequence belongs to the LpxH family. Requires Mn(2+) as cofactor.

It localises to the cell inner membrane. The catalysed reaction is UDP-2-N,3-O-bis[(3R)-3-hydroxytetradecanoyl]-alpha-D-glucosamine + H2O = 2-N,3-O-bis[(3R)-3-hydroxytetradecanoyl]-alpha-D-glucosaminyl 1-phosphate + UMP + 2 H(+). It participates in glycolipid biosynthesis; lipid IV(A) biosynthesis; lipid IV(A) from (3R)-3-hydroxytetradecanoyl-[acyl-carrier-protein] and UDP-N-acetyl-alpha-D-glucosamine: step 4/6. Its function is as follows. Hydrolyzes the pyrophosphate bond of UDP-2,3-diacylglucosamine to yield 2,3-diacylglucosamine 1-phosphate (lipid X) and UMP by catalyzing the attack of water at the alpha-P atom. Involved in the biosynthesis of lipid A, a phosphorylated glycolipid that anchors the lipopolysaccharide to the outer membrane of the cell. The polypeptide is UDP-2,3-diacylglucosamine hydrolase (Shewanella baltica (strain OS185)).